The chain runs to 254 residues: Glc operon transcriptional activator (254 aa).

Positions 6-74 (RPICEVVAES…QGRDSRVARL (69 aa)) constitute an HTH gntR-type domain. The H-T-H motif DNA-binding region spans 34–53 (ERRLCEKLGFSRSALREGLT).

Transcriptional activator of the glcDEFGB operon which is associated with glycolate utilization, and encodes malate synthase G and the genes needed for glycolate oxidase activity. Also negatively regulates the transcription of its own gene. Glycolate acts as an effector, but GlcC can also use acetate as an alternative effector. The protein is Glc operon transcriptional activator (glcC) of Escherichia coli O6:H1 (strain CFT073 / ATCC 700928 / UPEC).